A 2492-amino-acid polypeptide reads, in one-letter code: MTAEPMSESKLNTLVQKLHDFLAHSSEESEETSSPPRLAMNQNTDKISGSGSNSDMMENSKEEGTSSSEKSKSSGSSRSKRKPSIVTKYVESDDEKPLDDETVNEDASNENSENDITMQSLPKGTVIVQPEPVLNEDKDDFKGPEFRSRSKMKTENLKKRGEDGLHGIVSCTACGQQVNHFQKDSIYRHPSLQVLICKNCFKYYMSDDISRDSDGMDEQCRWCAEGGNLICCDFCHNAFCKKCILRNLGRKELSTIMDENNQWYCYICHPEPLLDLVTACNSVFENLEQLLQQNKKKIKVDSEKSNKVYEHTSRFSPKKTSSNCNGEEKKLDDSCSGSVTYSYSALIVPKEMIKKAKKLIETTANMNSSYVKFLKQATDNSEISSATKLRQLKAFKSVLADIKKAHLALEEDLNSEFRAMDAVNKEKNTKEHKVIDAKFETKARKGEKPCALEKKDISKSEAKLSRKQVDSEHMDQNVPTEEQRANKSTGGEHKKSDRKEEPQYEPANTSEDLDMDIVSVPSSVPEDIFENLETAMEVQSSVDHQGDGSSGTEQEVESSSVKLNISSKDNRGGIKSKTTAKVTKELYVKLTPVSLSNSPIKGADCQEVPQDKDGYKSCGLNPKLEKCGLGQENSDNEHLVENEVSLLLEESDLRRSPRVKTTPLRRPTETNPVTSNSDEECNETVKEKQKLSVPVRKKDKRNSSDSAIDNPKPNKLPKSKQSETVDQNSDSDEMLAILKEVSRMSHSSSSDTDINEIHTNHKTLYDLKTQAGKDDKGKRKRKSSTSGSDFDTKKGKSAKSSIISKKKRQTQSESSNYDSELEKEIKSMSKIGAARTTKKRIPNTKDFDSSEDEKHSKKGMDNQGHKNLKTSQEGSSDDAERKQERENFSSAEGTVDKDTTIMELRDRLPKKQQASASTDGVDKFSGKEESFTSLEVRKVAETKEKSKHLKTKTCKKVQDGLSDTAEKFLKKDQSDETSEDDKKQSKKGTEEKKKPSDFKKKVIKMEQQYESSSDGTEKLPEREEICHFPKGIKQIKNGTTDGEKKSKKIRDKTSKKKDELSDYAEKSTGKGDSCDSSEDKKSKNGAYGREKKRCKLLGKSSRKRQDCSSSDTEKYSMKEDGCNSSDKRLKRIELRERRNLSSKRNTKEIQSGSSSSDAEESSEDNKKKQQRTSSKKKAVIVKEKKRNSLRTSTKRKQADITSSSSSDIEDDDQNSIGEGSSDEQKIKPVTENLVLSSHTGFCQSSGDEALSKSVPVTVDDDDDDNDPENRIAKKMLLEEIKANLSSDEDGSSDDEPEEGKKRTGKQNEENPGDEEAKNQVNSESDSDSEESKKPRYRHRLLRHKLTVSDGESGEEKKTKPKEHKEVKGRNRRKVSSEDSEDSDFQESGVSEEVSESEDEQRPRTRSAKKAELEENQRSYKQKKKRRRIKVQEDSSSENKSNSEEEEEEKEEEEEEEEEEEEEEEDENDDSKSPGKGRKKIRKILKDDKLRTETQNALKEEEERRKRIAEREREREKLREVIEIEDASPTKCPITTKLVLDEDEETKEPLVQVHRNMVIKLKPHQVDGVQFMWDCCCESVKKTKKSPGSGCILAHCMGLGKTLQVVSFLHTVLLCDKLDFSTALVVCPLNTALNWMNEFEKWQEGLKDDEKLEVSELATVKRPQERSYMLQRWQEDGGVMIIGYEMYRNLAQGRNVKSRKLKEIFNKALVDPGPDFVVCDEGHILKNEASAVSKAMNSIRSRRRIILTGTPLQNNLIEYHCMVNFIKENLLGSIKEFRNRFINPIQNGQCADSTMVDVRVMKKRAHILYEMLAGCVQRKDYTALTKFLPPKHEYVLAVRMTSIQCKLYQYYLDHLTGVGNNSEGGRGKAGAKLFQDFQMLSRIWTHPWCLQLDYISKENKGYFDEDSMDEFIASDSDETSMSLSSDDYTKKKKKGKKGKKDSSSSGSGSDNDVEVIKVWNSRSRGGGEGNVDETGNNPSVSLKLEESKATSSSNPSSPAPDWYKDFVTDADAEVLEHSGKMVLLFEILRMAEEIGDKVLVFSQSLISLDLIEDFLELASREKTEDKDKPLIYKGEGKWLRNIDYYRLDGSTTAQSRKKWAEEFNDETNVRGRLFIISTKAGSLGINLVAANRVIIFDASWNPSYDIQSIFRVYRFGQTKPVYVYRFLAQGTMEDKIYDRQVTKQSLSFRVVDQQQVERHFTMNELTELYTFEPDLLDDPNSEKKKKRDTPMLPKDTILAELLQIHKEHIVGYHEHDSLLDHKEEEELTEEERKAAWAEYEAEKKGLTMRFNIPTGTNLPPVSFNSQTPYIPFNLGALSAMSNQQLEDLINQGREKVVEATNSVTAVRIQPLEDIISAVWKENMNLSEAQVQALALSRQASQELDVKRREAIYNDVLTKQQMLISCVQRILMNRRLQQQYNQQQQQQMTYQQATLGHLMMPKPPNLIMNPSNYQQIDMRGMYQPVAGGMQPPPLQRAPPPMRSKNPGPSQGKSM.

The tract at residues 1–146 (MTAEPMSESK…DKDDFKGPEF (146 aa)) is disordered. Lysine 10 participates in a covalent cross-link: Glycyl lysine isopeptide (Lys-Gly) (interchain with G-Cter in SUMO2). Residues 17 to 27 (KLHDFLAHSSE) are compositionally biased toward basic and acidic residues. 2 positions are modified to phosphoserine: serine 25 and serine 34. Polar residues predominate over residues 40 to 57 (MNQNTDKISGSGSNSDMM). The span at 58 to 72 (ENSKEEGTSSSEKSK) shows a compositional bias: basic and acidic residues. At tyrosine 89 the chain carries Phosphotyrosine. Phosphoserine is present on residues serine 92 and serine 112. The segment covering 92–108 (SDDEKPLDDETVNEDAS) has biased composition (acidic residues). A compositionally biased stretch (basic and acidic residues) spans 135–146 (NEDKDDFKGPEF). Residues lysine 138 and lysine 142 each participate in a glycyl lysine isopeptide (Lys-Gly) (interchain with G-Cter in SUMO2) cross-link. Residues 159–296 (KRGEDGLHGI…LEQLLQQNKK (138 aa)) enclose the ADD domain. The GATA-type; atypical zinc-finger motif lies at 170–206 (SCTACGQQVNHFQKDSIYRHPSLQVLICKNCFKYYMS). Serine 213 carries the post-translational modification Phosphoserine. The segment at 217–272 (DEQCRWCAEGGNLICCDFCHNAFCKKCILRNLGRKELSTIMDENNQWYCYICHPEP) adopts a PHD-type; atypical zinc-finger fold. Lysine 299 participates in a covalent cross-link: Glycyl lysine isopeptide (Lys-Gly) (interchain with G-Cter in SUMO2). A Phosphoserine modification is found at serine 316. A Glycyl lysine isopeptide (Lys-Gly) (interchain with G-Cter in SUMO2) cross-link involves residue lysine 438. Positions 445 to 502 (KGEKPCALEKKDISKSEAKLSRKQVDSEHMDQNVPTEEQRANKSTGGEHKKSDRKEEP) are enriched in basic and acidic residues. The tract at residues 445–614 (KGEKPCALEK…CQEVPQDKDG (170 aa)) is disordered. A compositionally biased stretch (polar residues) spans 550–567 (SGTEQEVESSSVKLNISS). The short motif at 581-594 (KVTKELYVKLTPVS) is the PxVxL motif element. Threonine 591 is modified (phosphothreonine). Phosphoserine is present on residues serine 594 and serine 598. Lysine 623 is covalently cross-linked (Glycyl lysine isopeptide (Lys-Gly) (interchain with G-Cter in SUMO1); alternate). Residue lysine 623 forms a Glycyl lysine isopeptide (Lys-Gly) (interchain with G-Cter in SUMO2); alternate linkage. Residue serine 634 is modified to Phosphoserine. Residues 648 to 1479 (LEESDLRRSP…SKSPGKGRKK (832 aa)) form a disordered region. Position 674 is a phosphothreonine (threonine 674). Phosphoserine is present on residues serine 675, serine 677, serine 729, and serine 731. The span at 755 to 777 (NEIHTNHKTLYDLKTQAGKDDKG) shows a compositional bias: basic and acidic residues. Serine 784, serine 819, serine 849, serine 850, serine 875, and serine 876 each carry phosphoserine. The segment covering 843–864 (NTKDFDSSEDEKHSKKGMDNQG) has biased composition (basic and acidic residues). Positions 878–887 (DAERKQEREN) are enriched in basic and acidic residues. The residue at position 889 (serine 889) is a Phosphoserine. Basic and acidic residues-rich tracts occupy residues 894–909 (TVDKDTTIMELRDRLP) and 920–944 (GVDKFSGKEESFTSLEVRKVAETKE). Residues 945–955 (KSKHLKTKTCK) show a composition bias toward basic residues. Serine 962 carries the phosphoserine modification. Residues 964–1004 (TAEKFLKKDQSDETSEDDKKQSKKGTEEKKKPSDFKKKVIK) show a composition bias toward basic and acidic residues. The residue at position 967 (lysine 967) is an N6-acetyllysine. A Phosphoserine modification is found at serine 974. Phosphothreonine is present on threonine 977. Residue lysine 1004 forms a Glycyl lysine isopeptide (Lys-Gly) (interchain with G-Cter in SUMO2) linkage. Phosphoserine is present on residues serine 1011, serine 1012, and serine 1013. Residues 1015–1027 (GTEKLPEREEICH) are compositionally biased toward basic and acidic residues. Over residues 1045–1055 (KSKKIRDKTSK) the composition is skewed to basic residues. Residues 1056–1082 (KKDELSDYAEKSTGKGDSCDSSEDKKS) are compositionally biased toward basic and acidic residues. Residue serine 1061 is modified to Phosphoserine. The residue at position 1063 (tyrosine 1063) is a Phosphotyrosine. Positions 1090–1102 (EKKRCKLLGKSSR) are enriched in basic residues. Residues 1103–1139 (KRQDCSSSDTEKYSMKEDGCNSSDKRLKRIELRERRN) are compositionally biased toward basic and acidic residues. Residues 1168–1195 (KQQRTSSKKKAVIVKEKKRNSLRTSTKR) show a composition bias toward basic residues. An interaction with DAXX region spans residues 1189 to 1326 (LRTSTKRKQA…KNQVNSESDS (138 aa)). Residues 1233 to 1246 (LVLSSHTGFCQSSG) are compositionally biased toward polar residues. A phosphoserine mark is found at serine 1244, serine 1245, and serine 1253. The segment covering 1267-1281 (PENRIAKKMLLEEIK) has biased composition (basic and acidic residues). The segment covering 1286–1297 (SDEDGSSDDEPE) has biased composition (acidic residues). A compositionally biased stretch (basic and acidic residues) spans 1298–1308 (EGKKRTGKQNE). Residues serine 1322, serine 1324, and serine 1326 each carry the phosphoserine modification. The segment covering 1334-1345 (PRYRHRLLRHKL) has biased composition (basic residues). Serine 1348 and serine 1352 each carry phosphoserine. 2 stretches are compositionally biased toward basic and acidic residues: residues 1353–1368 (GEEKKTKPKEHKEVKG) and 1408–1417 (KKAELEENQR). Positions 1419-1428 (YKQKKKRRRI) are enriched in basic residues. Residues 1443 to 1468 (EEEEEEKEEEEEEEEEEEEEEEDEND) show a composition bias toward acidic residues. Lysine 1488 participates in a covalent cross-link: Glycyl lysine isopeptide (Lys-Gly) (interchain with G-Cter in SUMO2). Serine 1527 is subject to Phosphoserine. Phosphothreonine is present on threonine 1529. The 188-residue stretch at 1581–1768 (KTKKSPGSGC…HCMVNFIKEN (188 aa)) folds into the Helicase ATP-binding domain. 1594–1601 (HCMGLGKT) lines the ATP pocket. Residues 1719–1722 (DEGH) carry the DEGH box motif. Serine 1906 and serine 1913 each carry phosphoserine. The interval 1913-2000 (SDSDETSMSL…SSNPSSPAPD (88 aa)) is disordered. A compositionally biased stretch (basic residues) spans 1929 to 1938 (KKKKKGKKGK). Lysine 1982 is covalently cross-linked (Glycyl lysine isopeptide (Lys-Gly) (interchain with G-Cter in SUMO1); alternate). A Glycyl lysine isopeptide (Lys-Gly) (interchain with G-Cter in SUMO2); alternate cross-link involves residue lysine 1982. Lysine 1987 is covalently cross-linked (Glycyl lysine isopeptide (Lys-Gly) (interchain with G-Cter in SUMO2)). A compositionally biased stretch (low complexity) spans 1990 to 1999 (SSSNPSSPAP). Serine 1992 and serine 1996 each carry phosphoserine. The interval 2010–2280 (DAEVLEHSGK…RKAAWAEYEA (271 aa)) is interaction with MECP2. Positions 2025 to 2205 (EILRMAEEIG…ERHFTMNELT (181 aa)) constitute a Helicase C-terminal domain. Position 2220 is a phosphoserine (serine 2220). The disordered stretch occupies residues 2462–2492 (PVAGGMQPPPLQRAPPPMRSKNPGPSQGKSM). Over residues 2468 to 2479 (QPPPLQRAPPPM) the composition is skewed to pro residues. Arginine 2474 and arginine 2480 each carry omega-N-methylarginine.

The protein belongs to the SNF2/RAD54 helicase family. Interacts with DAXX to form the chromatin remodeling complex ATRX:DAXX. Probably binds EZH2. Binds annexin V in a calcium and phosphatidylcholine/phosphatidylserine-dependent manner. Interacts directly with CBX5 via the PxVxL motif. Interacts with RAD50, MRE11 and NBN; indicative for an association with the MRN complex. Interacts with histone MACROH2A1. Interacts with histone H3 peptides methylated at 'Lys-10' with preferences H3K9me3 &gt; H3K9me2 &gt; H3K9me1. Interacts with histone H3 peptides unmethylated at 'Lys-5' (H3K4me0). Interacts with MECP2, SMC1 and SMC3. Interacts with SETDB1, TRIM28 and ZNF274.

Its subcellular location is the nucleus. The protein localises to the chromosome. It localises to the telomere. The protein resides in the PML body. The enzyme catalyses ATP + H2O = ADP + phosphate + H(+). In terms of biological role, involved in transcriptional regulation and chromatin remodeling. Facilitates DNA replication in multiple cellular environments and is required for efficient replication of a subset of genomic loci. Binds to DNA tandem repeat sequences in both telomeres and euchromatin and in vitro binds DNA quadruplex structures. May help stabilizing G-rich regions into regular chromatin structures by remodeling G4 DNA and incorporating H3.3-containing nucleosomes. Catalytic component of the chromatin remodeling complex ATRX:DAXX which has ATP-dependent DNA translocase activity and catalyzes the replication-independent deposition of histone H3.3 in pericentric DNA repeats outside S-phase and telomeres, and the in vitro remodeling of H3.3-containing nucleosomes. Its heterochromatin targeting is proposed to involve a combinatorial readout of histone H3 modifications (specifically methylation states of H3K9 and H3K4) and association with CBX5. Involved in maintaining telomere structural integrity in embryonic stem cells which probably implies recruitment of CBX5 to telomeres. May be involved in transcriptional regulation of telomeric repeat-containing RNA (TERRA). Acts as a negative regulator of chromatin incorporation of transcriptionally repressive histone MACROH2A1, particularily at telomeres. Participates in the allele-specific gene expression at the imprinted IGF2/H19 gene locus. On the maternal allele, required for the chromatin occupancy of SMC1 and CTCTF within the H19 imprinting control region (ICR) and involved in esatblishment of histone tails modifications in the ICR. May be involved in brain development and facial morphogenesis. Binds to zinc-finger coding genes with atypical chromatin signatures and regulates its H3K9me3 levels. Forms a complex with ZNF274, TRIM28 and SETDB1 to facilitate the deposition and maintenance of H3K9me3 at the 3' exons of zinc-finger genes. The protein is Transcriptional regulator ATRX (ATRX) of Pan troglodytes (Chimpanzee).